A 144-amino-acid polypeptide reads, in one-letter code: Large ribosomal subunit protein uL15 (144 aa).

The tract at residues Met1 to Gln58 is disordered. Gly residues predominate over residues Arg21–Gly31.

This sequence belongs to the universal ribosomal protein uL15 family. As to quaternary structure, part of the 50S ribosomal subunit.

Its function is as follows. Binds to the 23S rRNA. The chain is Large ribosomal subunit protein uL15 from Chromohalobacter salexigens (strain ATCC BAA-138 / DSM 3043 / CIP 106854 / NCIMB 13768 / 1H11).